The following is a 116-amino-acid chain: Putative iron-sulfur cluster insertion protein ErpA (116 aa).

3 residues coordinate iron-sulfur cluster: cysteine 44, cysteine 108, and cysteine 110.

The protein belongs to the HesB/IscA family. Homodimer. The cofactor is iron-sulfur cluster.

Functionally, required for insertion of 4Fe-4S clusters. In Herminiimonas arsenicoxydans, this protein is Putative iron-sulfur cluster insertion protein ErpA.